The following is a 504-amino-acid chain: Protein DETOXIFICATION 38 (504 aa).

12 helical membrane-spanning segments follow: residues 56-76 (LLLR…GMGI), 90-110 (LAAA…MLGM), 139-159 (IVLA…YPIL), 170-190 (YMGS…AVYF), 208-228 (ISAA…YAMG), 234-254 (IAYV…FYVI), 273-295 (GLWS…LWYT), 316-336 (SICM…NAAV), 356-376 (TWTA…VVIA), 401-421 (FLAV…VAVG), 433-453 (IGCY…TFNF), and 457-477 (GIWT…LYVT).

It belongs to the multi antimicrobial extrusion (MATE) (TC 2.A.66.1) family.

It localises to the membrane. The protein is Protein DETOXIFICATION 38 of Arabidopsis thaliana (Mouse-ear cress).